Reading from the N-terminus, the 159-residue chain is Acetolactate synthase small subunit (159 aa).

One can recognise an ACT domain in the interval 5–79; the sequence is ILSILLENES…DVLKVTEIED (75 aa).

The protein belongs to the acetolactate synthase small subunit family. Dimer of large and small chains.

It carries out the reaction 2 pyruvate + H(+) = (2S)-2-acetolactate + CO2. The protein operates within amino-acid biosynthesis; L-isoleucine biosynthesis; L-isoleucine from 2-oxobutanoate: step 1/4. Its pathway is amino-acid biosynthesis; L-valine biosynthesis; L-valine from pyruvate: step 1/4. The polypeptide is Acetolactate synthase small subunit (ilvH) (Buchnera aphidicola subsp. Baizongia pistaciae (strain Bp)).